We begin with the raw amino-acid sequence, 219 residues long: Probable GTP-binding protein EngB (219 aa).

Residues 33–217 (GPLEIAFAGR…RAAICETVGH (185 aa)) enclose the EngB-type G domain. GTP-binding positions include 41-48 (GRSNVGKS), 68-72 (GRTQE), 95-98 (DMPG), 162-165 (TKTD), and 196-198 (TSS). Ser-48 and Thr-70 together coordinate Mg(2+).

This sequence belongs to the TRAFAC class TrmE-Era-EngA-EngB-Septin-like GTPase superfamily. EngB GTPase family. Mg(2+) is required as a cofactor.

Functionally, necessary for normal cell division and for the maintenance of normal septation. The sequence is that of Probable GTP-binding protein EngB from Allorhizobium ampelinum (strain ATCC BAA-846 / DSM 112012 / S4) (Agrobacterium vitis (strain S4)).